The following is a 1450-amino-acid chain: Phospholipase B1, membrane-associated (1450 aa).

The signal sequence occupies residues 1-27 (MESWPGVSLVGLLLLLLLGQGPSQIHG). At 28 to 1422 (SSGENTSQPQ…KAKENSNTLY (1395 aa)) the chain is on the extracellular side. Residues N32, N45, and N179 are each glycosylated (N-linked (GlcNAc...) asparagine). 3 repeat units span residues 41–351 (RTLK…YRNS), 366–711 (MKEG…TKNS), and 712–1058 (NLGH…FRNS). The interval 41–1407 (RTLKNFSFPC…NPFLYTVRNS (1367 aa)) is 4 X 308-326 AA approximate repeats. Active-site residues include S404, D518, and H659. Residue N699 is glycosylated (N-linked (GlcNAc...) asparagine). Residues 708 to 720 (TKNSNLGHGTSMS) show a composition bias toward polar residues. The interval 708–734 (TKNSNLGHGTSMSCEEKAPSASPPTSV) is disordered. N-linked (GlcNAc...) asparagine glycosylation is found at N787, N801, N844, N880, N926, N1059, N1226, N1280, N1383, and N1387. Residues 1068 to 1407 (IENWGSDFLC…NPFLYTVRNS (340 aa)) form repeat 4. Positions 1408–1450 (QILLDKAKENSNTLYWAVPVAAVGGLVVGILGMMLWRTVRLVQ) are necessary for membrane localization. A helical transmembrane segment spans residues 1423-1443 (WAVPVAAVGGLVVGILGMMLW). At 1444-1450 (RTVRLVQ) the chain is on the cytoplasmic side.

The protein belongs to the 'GDSL' lipolytic enzyme family. Phospholipase B1 subfamily. In terms of processing, undergoes proteolytic cleavage in the ileum. As to expression, expressed in the ileum mucosa, Paneth cells spermatocytes, spermatids and sperm (at protein level). Expressed in the ileum, jejunum, esophagus and testis.

The protein resides in the apical cell membrane. The enzyme catalyses a 1,2-diacyl-sn-glycero-3-phosphocholine + H2O = a 1-acyl-sn-glycero-3-phosphocholine + a fatty acid + H(+). It carries out the reaction a 1-O-alkyl-2-acyl-sn-glycero-3-phosphocholine + H2O = a 1-O-alkyl-sn-glycero-3-phosphocholine + a fatty acid + H(+). It catalyses the reaction a 1-acyl-sn-glycero-3-phosphocholine + H2O = sn-glycerol 3-phosphocholine + a fatty acid + H(+). The catalysed reaction is a triacylglycerol + H2O = a diacylglycerol + a fatty acid + H(+). The enzyme catalyses 1,2-dihexadecanoyl-sn-glycero-3-phosphocholine + H2O = 1-hexadecanoyl-sn-glycero-3-phosphocholine + hexadecanoate + H(+). It carries out the reaction 1-hexadecanoyl-2-(9Z-octadecenoyl)-sn-glycero-3-phosphocholine + H2O = 1-hexadecanoyl-sn-glycero-3-phosphocholine + (9Z)-octadecenoate + H(+). It catalyses the reaction 1,2-di-(9Z-octadecenoyl)-sn-glycero-3-phosphocholine + H2O = 1-(9Z-octadecenoyl)-sn-glycero-3-phosphocholine + (9Z)-octadecenoate + H(+). The catalysed reaction is 1-hexadecanoyl-2-(9Z,12Z-octadecadienoyl)-sn-glycero-3-phosphocholine + H2O = (9Z,12Z)-octadecadienoate + 1-hexadecanoyl-sn-glycero-3-phosphocholine + H(+). The enzyme catalyses 1-hexadecanoyl-2-(9Z,12Z-octadecadienoyl)-sn-glycero-3-phosphocholine + H2O = 2-(9Z,12Z-octadecadienoyl)-sn-glycero-3-phosphocholine + hexadecanoate + H(+). It carries out the reaction 1-hexadecanoyl-2-(9Z-octadecenoyl)-sn-glycero-3-phosphoethanolamine + H2O = 1-hexadecanoyl-sn-glycero-3-phosphoethanolamine + (9Z)-octadecenoate + H(+). It catalyses the reaction 1-hexadecanoyl-2-(9Z-octadecenoyl)-sn-glycero-3-phospho-(1'-sn-glycerol) + H2O = 1-hexadecanoyl-sn-glycero-3-phospho-(1'-sn-glycerol) + (9Z)-octadecenoate + H(+). The catalysed reaction is 1,2-dihexadecanoyl-sn-glycero-3-phosphocholine + 2 H2O = sn-glycerol 3-phosphocholine + 2 hexadecanoate + 2 H(+). The enzyme catalyses 1-O-hexadecyl-2-(9Z)-octadecenoyl-sn-glycero-3-phosphocholine + H2O = 1-O-hexadecyl-sn-glycero-3-phosphocholine + (9Z)-octadecenoate + H(+). It carries out the reaction 1-hexadecanoyl-sn-glycero-3-phosphocholine + H2O = sn-glycerol 3-phosphocholine + hexadecanoate + H(+). It catalyses the reaction 1,2,3-tri-(9Z-octadecenoyl)-glycerol + H2O = di-(9Z)-octadecenoylglycerol + (9Z)-octadecenoate + H(+). The catalysed reaction is 1-hexadecanoyl-2-(9Z)-octadecenoyl-3-octadecanoyl-sn-glycerol + H2O = 1-hexadecanoyl-2-(9Z-octadecenoyl)-sn-glycerol + octadecanoate + H(+). The enzyme catalyses 1,3-dihexadecanoyl-2-(9Z-octadecenoyl)glycerol + H2O = 1,3-dihexadecanoylglycerol + (9Z)-octadecenoate + H(+). It carries out the reaction 1,3-dihexadecanoyl-2-(9Z-octadecenoyl)glycerol + H2O = 1-hexadecanoyl-2-(9Z-octadecenoyl)-glycerol + hexadecanoate + H(+). It catalyses the reaction 1-hexadecanoyl-2-(9Z)-octadecenoyl-3-octadecanoyl-sn-glycerol + H2O = 1-hexadecanoyl-3-octadecanoyl-sn-glycerol + (9Z)-octadecenoate + H(+). The catalysed reaction is 1-hexadecanoyl-2-(9Z)-octadecenoyl-3-octadecanoyl-sn-glycerol + H2O = 2-(9Z-octadecenoyl)-3-octadecanoyl-sn-glycerol + hexadecanoate + H(+). The enzyme catalyses 1-octadecanoyl-2-(9Z,12Z)-octadecadienoyl-sn-glycerol + H2O = 1-octadecanoyl-sn-glycerol + (9Z,12Z)-octadecadienoate + H(+). It carries out the reaction 1,2-di-(9Z-octadecenoyl)-sn-glycerol + H2O = 1-(9Z-octadecenoyl)-sn-glycerol + (9Z)-octadecenoate + H(+). It catalyses the reaction 2,3-di-(9Z)-octadecenoyl-sn-glycerol + H2O = 3-(9Z-octadecenoyl)-sn-glycerol + (9Z)-octadecenoate + H(+). The catalysed reaction is 1,3-di-(9Z-octadecenoyl)-glycerol + H2O = 1-(9Z-octadecenoyl)-glycerol + (9Z)-octadecenoate + H(+). The enzyme catalyses 1-(9Z-octadecenoyl)-glycerol + H2O = glycerol + (9Z)-octadecenoate + H(+). It carries out the reaction 2-(9Z-octadecenoyl)-glycerol + H2O = glycerol + (9Z)-octadecenoate + H(+). Up-regulated by bile acids such as deoxycholate. Inhibited by diisopropyl fluorophosphate. Functionally, calcium-independent membrane-associated phospholipase that catalyzes complete diacylation of phospholipids by hydrolyzing both sn-1 and sn-2 fatty acyl chains attached to the glycerol backbone (phospholipase B activity). Has dual phospholipase and lysophospholipase activities toward diacylphospholipids. Preferentially cleaves sn-2 ester bonds over sn-1 bonds. Acts as a lipase toward glycerolipid substrates. Hydrolyzes fatty acyl chains of diacylglycerols with preference for the sn-2 position and of triacylglycerols with not positional selectivity. May also hydrolyze long chain retinyl esters such as retinyl palmitate. May contribute to digestion of dietary phospholipids, glycerolipids and retinoids, facilitating lipid absorption at the brush border. The sequence is that of Phospholipase B1, membrane-associated (Plb1) from Rattus norvegicus (Rat).